A 1200-amino-acid chain; its full sequence is Nuclear pore complex protein Nup133 (1200 aa).

Residues 1 to 28 (MERNLQKQLYGISRESSPGARRYSMPAA) are disordered.

It belongs to the nucleoporin Nup133 family. Forms part of the Nup107-Nup160 subcomplex in the nuclear pore.

The protein localises to the nucleus. Its subcellular location is the nuclear pore complex. Probable component of the nuclear pore complex (NPC). Plays a role in NPC assembly and/or maintenance. The sequence is that of Nuclear pore complex protein Nup133 from Drosophila melanogaster (Fruit fly).